A 408-amino-acid polypeptide reads, in one-letter code: Ubiquitin-associated domain-containing protein 1 (408 aa).

The region spanning 14–98 (LRLQVCTMEG…LLLIKKRAPP (85 aa)) is the Ubiquitin-like domain. Residues 100-119 (LPKMADVSAEEKRKQEQKAP) form a disordered region. Residues 108 to 119 (AEEKRKQEQKAP) show a composition bias toward basic and acidic residues. The UBA 1 domain occupies 185–231 (DEDEEDRVDEIALRQLTEMGFPESRAVKALRLNHMSVTQAMEWLIEH). The interval 235–275 (PAVDAPLPGQTPSEAAAEAGASSAEATAGPSSEAGGEEAKD) is disordered. The span at 245-268 (TPSEAAAEAGASSAEATAGPSSEA) shows a compositional bias: low complexity. In terms of domain architecture, UBA 2 spans 291-331 (RPDPRAVIALMEMGFDEKEVVDALRVNNNQQNAACEWLLGD). One can recognise an STI1 domain in the interval 356–395 (NPVVQLGLTNPKTLLAFEDMLENPLNSTQWMNDPETGPVM).

As to quaternary structure, component of the KPC complex.

The protein resides in the cytoplasm. The protein operates within protein modification; protein ubiquitination. Functionally, non-catalytic component of the KPC complex, a E3 ubiquitin-protein ligase complex that mediates polyubiquitination of target proteins, such as CDKN1B and NFKB1. Within the KPC complex, UBAC1 acts as an adapter that promotes the transfer of target proteins that have been polyubiquitinated by RNF123/KPC1 to the 26S proteasome. This Gallus gallus (Chicken) protein is Ubiquitin-associated domain-containing protein 1 (UBAC1).